The sequence spans 492 residues: Signal transduction histidine-protein kinase/phosphatase MprB (492 aa).

The Cytoplasmic portion of the chain corresponds to 1-27 (MAFPPNSWRPTGPLPTSSLSLRWRVMM). The helical transmembrane segment at 28 to 48 (LAMSMVALVVVLMAVAVYAVV) threads the bilayer. Residues 49-165 (SRALYDDLDN…TVQVLRRLGT (117 aa)) are Extracellular-facing. Residues 166 to 186 (VLLIVGGIGVAVAAIAGGAVA) form a helical membrane-spanning segment. Residues 187–239 (RAGLRPVGRLTEAAERVARTDDLRPIPVVGSDELARLTEAFNMMLRALAESRE) form the HAMP domain. At 187-492 (RAGLRPVGRL…DRGGHTVATE (306 aa)) the chain is on the cytoplasmic side. The 221-residue stretch at 247–467 (DAGHELRTPL…SVHMLLPGQR (221 aa)) folds into the Histidine kinase domain. The residue at position 250 (His-250) is a Phosphohistidine; by autocatalysis. The interval 470–492 (DPGATRSAEGFVDDRGGHTVATE) is disordered.

The cofactor is Mg(2+). Mn(2+) serves as cofactor. Autophosphorylated.

It is found in the cell membrane. The enzyme catalyses ATP + protein L-histidine = ADP + protein N-phospho-L-histidine.. Member of the two-component regulatory system MprB/MprA which contributes to maintaining a balance among several systems involved in stress resistance and is required for establishment and maintenance of persistent infection in the host. In response to environmental signals MprB acts both as a membrane-associated protein kinase that undergoes autophosphorylation and subsequently transfers the phosphate to MprA, and a protein phosphatase that dephosphorylates phospho-MprA. The polypeptide is Signal transduction histidine-protein kinase/phosphatase MprB (mprB) (Mycolicibacterium smegmatis (strain ATCC 700084 / mc(2)155) (Mycobacterium smegmatis)).